Consider the following 192-residue polypeptide: Probable nicotinate-nucleotide adenylyltransferase (192 aa).

It belongs to the NadD family.

The enzyme catalyses nicotinate beta-D-ribonucleotide + ATP + H(+) = deamido-NAD(+) + diphosphate. It functions in the pathway cofactor biosynthesis; NAD(+) biosynthesis; deamido-NAD(+) from nicotinate D-ribonucleotide: step 1/1. In terms of biological role, catalyzes the reversible adenylation of nicotinate mononucleotide (NaMN) to nicotinic acid adenine dinucleotide (NaAD). In Cereibacter sphaeroides (strain ATCC 17029 / ATH 2.4.9) (Rhodobacter sphaeroides), this protein is Probable nicotinate-nucleotide adenylyltransferase.